The following is a 358-amino-acid chain: Peptide chain release factor 1 (358 aa).

N5-methylglutamine is present on Gln233.

It belongs to the prokaryotic/mitochondrial release factor family. Methylated by PrmC. Methylation increases the termination efficiency of RF1.

It localises to the cytoplasm. Functionally, peptide chain release factor 1 directs the termination of translation in response to the peptide chain termination codons UAG and UAA. In Agathobacter rectalis (strain ATCC 33656 / DSM 3377 / JCM 17463 / KCTC 5835 / VPI 0990) (Eubacterium rectale), this protein is Peptide chain release factor 1.